The following is a 199-amino-acid chain: Tropomyosin-1 (199 aa).

A coiled-coil region spans residues 1–199; that stretch reads MDKIREKLSN…DEIAASLENL (199 aa). Residues Lys39 and Lys59 each participate in a glycyl lysine isopeptide (Lys-Gly) (interchain with G-Cter in ubiquitin) cross-link. Disordered stretches follow at residues 59 to 81 and 102 to 147; these read KLEA…ENQI and LAES…TEKL. Basic and acidic residues-rich tracts occupy residues 68–80 and 102–114; these read KQTE…KENQ and LAES…DSHH. Positions 115 to 126 are enriched in polar residues; it reads LQSNNDNFSKKN. Over residues 136–147 the composition is skewed to basic and acidic residues; sequence SDTKLKETTEKL. Lys187 is covalently cross-linked (Glycyl lysine isopeptide (Lys-Gly) (interchain with G-Cter in ubiquitin)). Ser195 is modified (phosphoserine).

As to quaternary structure, homodimer.

Its subcellular location is the cytoplasm. It is found in the cytoskeleton. This is Tropomyosin-1 (TPM1) from Saccharomyces cerevisiae (strain ATCC 204508 / S288c) (Baker's yeast).